A 419-amino-acid polypeptide reads, in one-letter code: uncharacterized protein (419 aa).

The next 11 helical transmembrane spans lie at 1–21 (MTTV…FLIL), 24–44 (VSPA…GGAD), 66–86 (ILAA…NSIT), 101–121 (ALAL…VAVI), 174–194 (SVMM…YFLA), 216–236 (NLPS…LLAL), 242–262 (IKVD…FCMG), 280–300 (PVAI…NSGL), 311–331 (SGLP…LATA), 349–369 (LELG…ATVF), and 396–416 (IPYE…IFGV).

Belongs to the CitM (TC 2.A.11) transporter family.

The protein resides in the cell membrane. This is an uncharacterized protein from Haemophilus influenzae (strain ATCC 51907 / DSM 11121 / KW20 / Rd).